The sequence spans 176 residues: Peptide methionine sulfoxide reductase B3 (176 aa).

A signal peptide spans methionine 1–serine 26. Residues aspartate 51 to alanine 172 enclose the MsrB domain. Positions 90, 93, 136, and 139 each coordinate Zn(2+). Residues cysteine 108 and cysteine 161 are joined by a disulfide bond. The active-site Nucleophile is cysteine 161.

The protein belongs to the MsrB Met sulfoxide reductase family. The cofactor is Zn(2+).

Its subcellular location is the endoplasmic reticulum. The catalysed reaction is L-methionyl-[protein] + [thioredoxin]-disulfide + H2O = L-methionyl-(R)-S-oxide-[protein] + [thioredoxin]-dithiol. Catalyzes the reduction of methionine sulfoxide (MetSO) to methionine in proteins. Plays a protective role against oxidative stress by restoring activity to proteins that have been inactivated by methionine oxidation. Involved in cold tolerance. Eliminates MetSO and reactive oxygen species that accumulate at the ER during cold acclimation. MSRB family specifically reduces the MetSO R-enantiomer. The sequence is that of Peptide methionine sulfoxide reductase B3 (MSRB3) from Arabidopsis thaliana (Mouse-ear cress).